The following is a 109-amino-acid chain: Parvalbumin alpha (109 aa).

2 EF-hand domains span residues 38–73 and 77–109; these read KTDA…FSAH and LNDT…VAQA. Ca(2+) is bound by residues aspartate 51, aspartate 53, serine 55, glutamate 62, aspartate 90, aspartate 92, aspartate 94, lysine 96, and glutamate 101.

This sequence belongs to the parvalbumin family.

Its function is as follows. In muscle, parvalbumin is thought to be involved in relaxation after contraction. It binds two calcium ions. This chain is Parvalbumin alpha, found in Triakis semifasciata (Leopard shark).